The following is a 265-amino-acid chain: Sulfur carrier protein FdhD (265 aa).

The active-site Cysteine persulfide intermediate is C107.

Belongs to the FdhD family.

It localises to the cytoplasm. In terms of biological role, required for formate dehydrogenase (FDH) activity. Acts as a sulfur carrier protein that transfers sulfur from IscS to the molybdenum cofactor prior to its insertion into FDH. This Staphylococcus aureus (strain NCTC 8325 / PS 47) protein is Sulfur carrier protein FdhD.